A 122-amino-acid polypeptide reads, in one-letter code: Large ribosomal subunit protein uL14 (122 aa).

It belongs to the universal ribosomal protein uL14 family. As to quaternary structure, part of the 50S ribosomal subunit. Forms a cluster with proteins L3 and L19. In the 70S ribosome, L14 and L19 interact and together make contacts with the 16S rRNA in bridges B5 and B8.

Binds to 23S rRNA. Forms part of two intersubunit bridges in the 70S ribosome. This chain is Large ribosomal subunit protein uL14, found in Chlamydia caviae (strain ATCC VR-813 / DSM 19441 / 03DC25 / GPIC) (Chlamydophila caviae).